Reading from the N-terminus, the 1187-residue chain is Nucleolar protein 6 (1187 aa).

A compositionally biased stretch (basic and acidic residues) spans 1–20 (MGRIKENQSKKKTLLRDSKA). 2 disordered regions span residues 1–64 (MGRI…FKHP) and 1134–1187 (REQR…SALC).

The protein belongs to the NRAP family. As to quaternary structure, part of the small subunit (SSU) processome, composed of more than 70 proteins and the RNA chaperone small nucleolar RNA (snoRNA) U3.

It localises to the nucleus. The protein localises to the nucleolus. Its subcellular location is the chromosome. Part of the small subunit (SSU) processome, first precursor of the small eukaryotic ribosomal subunit. During the assembly of the SSU processome in the nucleolus, many ribosome biogenesis factors, an RNA chaperone and ribosomal proteins associate with the nascent pre-rRNA and work in concert to generate RNA folding, modifications, rearrangements and cleavage as well as targeted degradation of pre-ribosomal RNA by the RNA exosome. This Drosophila mojavensis (Fruit fly) protein is Nucleolar protein 6.